The primary structure comprises 188 residues: MSDENKPGEAAELDAGVAPEAQPETELTVEELIIRLEAEKADMNGQILRLLADLDNTRKRADRQVSEARIYAIEKFAADLLSVSDNLSRALDALPDSERENLTDAGKNLLGGIEMTAKELNTALSRHGVVPVPAEPGAVFDPNVHQAVAQIPSPQPSGTIAQLFQPGWKIGDRTLRAAMVAVSTGPAN.

A disordered region spans residues 1–24 (MSDENKPGEAAELDAGVAPEAQPE).

The protein belongs to the GrpE family. Homodimer.

It localises to the cytoplasm. Functionally, participates actively in the response to hyperosmotic and heat shock by preventing the aggregation of stress-denatured proteins, in association with DnaK and GrpE. It is the nucleotide exchange factor for DnaK and may function as a thermosensor. Unfolded proteins bind initially to DnaJ; upon interaction with the DnaJ-bound protein, DnaK hydrolyzes its bound ATP, resulting in the formation of a stable complex. GrpE releases ADP from DnaK; ATP binding to DnaK triggers the release of the substrate protein, thus completing the reaction cycle. Several rounds of ATP-dependent interactions between DnaJ, DnaK and GrpE are required for fully efficient folding. The protein is Protein GrpE of Hyphomonas neptunium (strain ATCC 15444).